The chain runs to 417 residues: Prostaglandin E2 receptor EP3 subtype (417 aa).

The Extracellular portion of the chain corresponds to 1–52; it reads MKATRDHASAPFCTRFNHSDPGIWAAERAVEAPNNLTLPPEPSEDCGSVSVA. N17 and N35 each carry an N-linked (GlcNAc...) asparagine glycan. Residues 53–77 traverse the membrane as a helical segment; sequence FSMTMMITGFVGNALAITLVSKSYR. Over 78 to 90 the chain is Cytoplasmic; that stretch reads RREGKRKKSFLLC. Residues 91-111 traverse the membrane as a helical segment; that stretch reads IGWLALTDMVGQLLTSPVVIV. Over 112–130 the chain is Extracellular; sequence LYLSHQRWEQLDPSGRLCT. Residues 131–152 traverse the membrane as a helical segment; the sequence is FFGLTMTVFGLSSLFIASAMAV. Residues 153 to 174 are Cytoplasmic-facing; that stretch reads ERALATRAPHWYSSHMKTSVTR. The chain crosses the membrane as a helical span at residues 175-196; the sequence is AVLLGVWLAVLAFALLPVLGVG. Residues 197–226 lie on the Extracellular side of the membrane; that stretch reads QYTIQWPGTWCFISTGPGGNGTNSRQNWGN. N-linked (GlcNAc...) asparagine glycosylation is present at N216. Residues 227–252 form a helical membrane-spanning segment; it reads VFFASAFAILGLSALVVTFACNLATI. The Cytoplasmic portion of the chain corresponds to 253–282; that stretch reads KALVSRCRAKATASQSSAQWGRITTETAIQ. A helical membrane pass occupies residues 283-306; the sequence is LMGIMCVLSVCWSPLLIMMLKMIF. N-linked (GlcNAc...) asparagine glycosylation occurs at N307. Residues 307-326 are Extracellular-facing; the sequence is NHTSVEHCKTYTENQDECNF. Residues 327 to 348 traverse the membrane as a helical segment; it reads FLIAVRLASLNQILDPWVYLLL. Residues 349-417 lie on the Cytoplasmic side of the membrane; it reads RKILLQKFCQ…HIYLHTLEHQ (69 aa).

The protein belongs to the G-protein coupled receptor 1 family. As to quaternary structure, interacts (via C-terminus) with MKLN1.

Its subcellular location is the cell membrane. In terms of biological role, receptor for prostaglandin E2 (PGE2). The various isoforms have identical ligand binding properties but interact with different second messenger systems: isoform EP3A couples to G(i)/G(o) proteins; isoform EP3B and isoform EP3C couple to G(s), and isoform EP3D couples to G(i), G(s) and G(p). Required for normal development of fever in response to pyrinogens, including IL1B, prostaglandin E2 and bacterial lipopolysaccharide (LPS). Required for normal potentiation of platelet aggregation by prostaglandin E2, and thus plays a role in the regulation of blood coagulation. Required for increased HCO3(-) secretion in the duodenum in response to mucosal acidification, and thereby contributes to the protection of the mucosa against acid-induced ulceration. Not required for normal kidney function, normal urine volume and osmolality. The sequence is that of Prostaglandin E2 receptor EP3 subtype (PTGER3) from Bos taurus (Bovine).